We begin with the raw amino-acid sequence, 299 residues long: Pyridoxal kinase PdxY (299 aa).

Serine 18 lines the substrate pocket. ATP is bound by residues aspartate 120 and glutamate 157. Position 235 (aspartate 235) interacts with substrate.

It belongs to the pyridoxine kinase family. PdxY subfamily. In terms of assembly, homodimer. Requires Mg(2+) as cofactor.

The catalysed reaction is pyridoxal + ATP = pyridoxal 5'-phosphate + ADP + H(+). It participates in cofactor metabolism; pyridoxal 5'-phosphate salvage; pyridoxal 5'-phosphate from pyridoxal: step 1/1. Its function is as follows. Pyridoxal kinase involved in the salvage pathway of pyridoxal 5'-phosphate (PLP). Catalyzes the phosphorylation of pyridoxal to PLP. The sequence is that of Pyridoxal kinase PdxY from Deinococcus geothermalis (strain DSM 11300 / CIP 105573 / AG-3a).